Here is a 433-residue protein sequence, read N- to C-terminus: Glutamate--tRNA ligase (433 aa).

The 'HIGH' region motif lies at 10 to 20 (PSPTGYLHIGG). The 'KMSKS' region motif lies at 211-215 (KMSKR). Lys214 contacts ATP.

The protein belongs to the class-I aminoacyl-tRNA synthetase family. Glutamate--tRNA ligase type 1 subfamily. Monomer.

The protein resides in the cytoplasm. It catalyses the reaction tRNA(Glu) + L-glutamate + ATP = L-glutamyl-tRNA(Glu) + AMP + diphosphate. In terms of biological role, catalyzes the attachment of glutamate to tRNA(Glu) in a two-step reaction: glutamate is first activated by ATP to form Glu-AMP and then transferred to the acceptor end of tRNA(Glu). The sequence is that of Glutamate--tRNA ligase from Akkermansia muciniphila (strain ATCC BAA-835 / DSM 22959 / JCM 33894 / BCRC 81048 / CCUG 64013 / CIP 107961 / Muc).